Reading from the N-terminus, the 348-residue chain is 4-hydroxy-3-methylbut-2-en-1-yl diphosphate synthase (flavodoxin) (348 aa).

Residues Cys-263, Cys-266, Cys-298, and Glu-305 each contribute to the [4Fe-4S] cluster site.

This sequence belongs to the IspG family. [4Fe-4S] cluster serves as cofactor.

The enzyme catalyses (2E)-4-hydroxy-3-methylbut-2-enyl diphosphate + oxidized [flavodoxin] + H2O + 2 H(+) = 2-C-methyl-D-erythritol 2,4-cyclic diphosphate + reduced [flavodoxin]. It participates in isoprenoid biosynthesis; isopentenyl diphosphate biosynthesis via DXP pathway; isopentenyl diphosphate from 1-deoxy-D-xylulose 5-phosphate: step 5/6. Functionally, converts 2C-methyl-D-erythritol 2,4-cyclodiphosphate (ME-2,4cPP) into 1-hydroxy-2-methyl-2-(E)-butenyl 4-diphosphate. This Dehalococcoides mccartyi (strain ATCC BAA-2100 / JCM 16839 / KCTC 5957 / BAV1) protein is 4-hydroxy-3-methylbut-2-en-1-yl diphosphate synthase (flavodoxin).